The primary structure comprises 526 residues: Ferrochelatase-2, chloroplastic (526 aa).

It belongs to the ferrochelatase family.

The protein localises to the plastid. It is found in the chloroplast. It catalyses the reaction heme b + 2 H(+) = protoporphyrin IX + Fe(2+). It functions in the pathway porphyrin-containing compound metabolism; protoheme biosynthesis; protoheme from protoporphyrin-IX: step 1/1. Functionally, catalyzes the ferrous insertion into protoporphyrin IX. This is Ferrochelatase-2, chloroplastic from Oryza sativa subsp. japonica (Rice).